A 368-amino-acid polypeptide reads, in one-letter code: MASLVVIVSLLLAAFASPLLETAHSYNVTAPRVSLNPIDACWRRNPKWATNRQALAHCAVGYGKAAIGGKNGPIYVVTNPSDNPTRPSPGTLRYAVSQPKPLWITFARDMVIVLKSQLMINSYKTIDGRGAKVEIANGPCLRIRQVKHVIIHGISIHDCKADPNGMDGDGIRVFQSTHVWIDHCFLSRCHDGLIDVIVSSTAVTISNNYFTQHDKVMLLGHDDSYMGDKDMRVTIAFNTFGPGLIERMPRVRRGYAHVANNRYEKWQMYAIGGSANPIIFSEGNYFVAPEKRSSKQVTKRMMAGPDSKRWKWGTSRDVFMNGAFFGPPGVIVRPLYKGGEGFRVAHGSLVPSLTSSAGPLRCYVGRIC.

Residues 1–25 (MASLVVIVSLLLAAFASPLLETAHS) form the signal peptide. Asn-27 carries an N-linked (GlcNAc...) asparagine glycan. Ca(2+) is bound by residues Asp-167, Asp-191, and Asp-195. Arg-247 is a catalytic residue.

The protein belongs to the polysaccharide lyase 1 family. Ca(2+) is required as a cofactor.

The enzyme catalyses Eliminative cleavage of (1-&gt;4)-alpha-D-galacturonan to give oligosaccharides with 4-deoxy-alpha-D-galact-4-enuronosyl groups at their non-reducing ends.. It functions in the pathway glycan metabolism; pectin degradation; 2-dehydro-3-deoxy-D-gluconate from pectin: step 2/5. This Arabidopsis thaliana (Mouse-ear cress) protein is Probable pectate lyase 4.